A 391-amino-acid polypeptide reads, in one-letter code: Alanine racemase, biosynthetic (391 aa).

Residue lysine 52 is the Proton acceptor; specific for D-alanine of the active site. Residue lysine 52 is modified to N6-(pyridoxal phosphate)lysine. A substrate-binding site is contributed by arginine 149. Tyrosine 271 serves as the catalytic Proton acceptor; specific for L-alanine. Residue methionine 330 coordinates substrate.

It belongs to the alanine racemase family. It depends on pyridoxal 5'-phosphate as a cofactor.

The enzyme catalyses L-alanine = D-alanine. The protein operates within amino-acid biosynthesis; D-alanine biosynthesis; D-alanine from L-alanine: step 1/1. It participates in cell wall biogenesis; peptidoglycan biosynthesis. Functionally, catalyzes the interconversion of L-alanine and D-alanine. Provides the D-alanine required for cell wall biosynthesis. The protein is Alanine racemase, biosynthetic (alr) of Agrobacterium fabrum (strain C58 / ATCC 33970) (Agrobacterium tumefaciens (strain C58)).